The sequence spans 527 residues: Cytochrome P450 monooygenase 3 (527 aa).

Residues 21-41 (IAVAFAALCGATGLLAFSWWI) traverse the membrane as a helical segment. C473 contributes to the heme binding site.

Belongs to the cytochrome P450 family. The cofactor is heme.

The protein resides in the membrane. Its pathway is plant hormone biosynthesis; gibberellin biosynthesis. Its function is as follows. Gibberellin 13-hydroxylase; part of the gene cluster that mediates the biosynthesis of gibberellins (GAs), diterpenoids that may provide a selective advantage during infection of the preferred host plant, rice. Gibberellins (GAs) are diterpenoids and are synthesized via the mevalonate pathway. Biosynthesis of the major metabolite GA3 (gibberellic acid) from geranylgeranyl diphosphate (GGPP) requires 13 steps. The GGPP produced by the geranylgeranyl diphosphate synthase GGS2 is converted to ent-kaurene via ent-copalyldiphosphate in a two-step cyclization reaction performed by the bifunctional ent-copalyl diphosphate synthase/ent-kaurene synthase enzyme (CPS/KS). Ent-Kaurene is metabolized to GAs by a series of oxidation reactions catalyzed by cytochrome P450 monooxygenases. Cytochrome P450 monooxygenase P450-4 is an ent-kaurene oxidase that catalyzes the three oxidation steps between ent-kaurene and ent-kaurenoic acid. The highly multifunctional cytochrome P450 monooxygenase P450-1 then catalyzes four steps involving oxidation at two carbon atoms, in the main pathway from ent-kaurenoic acid to GA14 via GA12-aldehyde as well as producing kaurenolides and fujenoic acids as by-products. The cytochrome P450 monooxygenase P450-2 then converts GA14 to GA4 by removal of C-20. GA4 is further converted to GA7 by the GA4 desaturase DES via 1,2-desaturation before cytochrome P450 monooxygenase P450-3, a 13-hydroxylase, hydroxylates GA7 to GA3, the final product of the GA-biosynthetic pathway. This is Cytochrome P450 monooygenase 3 from Gibberella fujikuroi (strain CBS 195.34 / IMI 58289 / NRRL A-6831) (Bakanae and foot rot disease fungus).